A 261-amino-acid polypeptide reads, in one-letter code: Kallikrein-1 (261 aa).

The N-terminal stretch at 1–18 (MWFLILFLALSLGRNDAA) is a signal peptide. Residues 19–24 (PPVQSR) constitute a propeptide, activation peptide. Residues 25–258 (VVGGYNCEMN…FTPWIKEVMK (234 aa)) form the Peptidase S1 domain. 5 cysteine pairs are disulfide-bonded: Cys31–Cys173, Cys50–Cys66, Cys152–Cys219, Cys184–Cys198, and Cys209–Cys234. Catalysis depends on His65, which acts as the Charge relay system. Asn108 is a glycosylation site (N-linked (GlcNAc...) asparagine). Asp120 serves as the catalytic Charge relay system. The active-site Charge relay system is the Ser213.

It belongs to the peptidase S1 family. Kallikrein subfamily. As to expression, high levels in pancreas, submaxillary and parotid glands, spleen, and kidney.

The catalysed reaction is Preferential cleavage of Arg-|-Xaa bonds in small molecule substrates. Highly selective action to release kallidin (lysyl-bradykinin) from kininogen involves hydrolysis of Met-|-Xaa or Leu-|-Xaa.. This chain is Kallikrein-1 (Ngfg), found in Rattus norvegicus (Rat).